The sequence spans 172 residues: Agamous-like MADS-box protein AGL29 (172 aa).

Residues 1-61 (MGRRKIKMEM…GKPFSYGKPN (61 aa)) enclose the MADS-box domain. A coiled-coil region spans residues 86-123 (NYRPKLKRLSERLDLLNQEVEAEKERGEKSQEKLESAG). Positions 106–125 (EAEKERGEKSQEKLESAGDE) are disordered.

As to expression, expressed in pollen.

The protein resides in the nucleus. Its function is as follows. Probable transcription factor. The polypeptide is Agamous-like MADS-box protein AGL29 (Arabidopsis thaliana (Mouse-ear cress)).